A 754-amino-acid chain; its full sequence is Disintegrin and metalloproteinase domain-containing protein 32 (754 aa).

The signal sequence occupies residues 1-22 (MLGAMLHTLLLLLLAELGALLA). Ser23 bears the Phosphoserine mark. A propeptide spanning residues 23 to 176 (SGPESQSSFL…TNYGILINKK (154 aa)) is cleaved from the precursor. An N-linked (GlcNAc...) asparagine glycan is attached at Asn126. The Extracellular portion of the chain corresponds to 177-689 (PKSPFKNLFP…ERASKNQEKK (513 aa)). The region spanning 187-384 (LYLEMSIVVD…EGAKCLQNKP (198 aa)) is the Peptidase M12B domain. 4 disulfide bridges follow: Cys296–Cys379, Cys338–Cys363, Cys340–Cys345, and Cys454–Cys475. N-linked (GlcNAc...) asparagine glycans are attached at residues Asn362, Asn469, Asn570, and Asn571. Residues 391-483 (AAVCGNGKVE…NCPPDVTINN (93 aa)) enclose the Disintegrin domain. Residues 628 to 660 (QSKTCSSKCHGNGVCNSHGVCHCNAGYSPPNCQ) enclose the EGF-like domain. Cystine bridges form between Cys632-Cys642, Cys636-Cys648, and Cys650-Cys659. The chain crosses the membrane as a helical span at residues 690–710 (WLLSLYIVLIILASVFLIGTG). The Cytoplasmic segment spans residues 711 to 754 (WKGLKQCGSKEEESMSSESKSEDSTYTYVSRSTSETSSMTSTSS). A compositionally biased stretch (basic and acidic residues) spans 720-733 (KEEESMSSESKSED). The interval 720–754 (KEEESMSSESKSEDSTYTYVSRSTSETSSMTSTSS) is disordered. Positions 734 to 754 (STYTYVSRSTSETSSMTSTSS) are enriched in low complexity.

As to expression, expressed in sperm (at protein level). Highly expressed in the testis and weakly expressed in the epididymis, brain and heart.

The protein localises to the membrane. May play a role in sperm development and fertilization This is a non-catalytic metalloprotease-like protein. The sequence is that of Disintegrin and metalloproteinase domain-containing protein 32 from Mus musculus (Mouse).